We begin with the raw amino-acid sequence, 194 residues long: Small ribosomal subunit protein uS7 (194 aa).

It belongs to the universal ribosomal protein uS7 family. Part of the 30S ribosomal subunit.

One of the primary rRNA binding proteins, it binds directly to 16S rRNA where it nucleates assembly of the head domain of the 30S subunit. Is located at the subunit interface close to the decoding center. This is Small ribosomal subunit protein uS7 from Archaeoglobus fulgidus (strain ATCC 49558 / DSM 4304 / JCM 9628 / NBRC 100126 / VC-16).